Reading from the N-terminus, the 298-residue chain is Bifunctional protein FolD (298 aa).

NADP(+)-binding positions include 165–167, Ser-194, and Ile-235; that span reads GRG.

The protein belongs to the tetrahydrofolate dehydrogenase/cyclohydrolase family. Homodimer.

It catalyses the reaction (6R)-5,10-methylene-5,6,7,8-tetrahydrofolate + NADP(+) = (6R)-5,10-methenyltetrahydrofolate + NADPH. The catalysed reaction is (6R)-5,10-methenyltetrahydrofolate + H2O = (6R)-10-formyltetrahydrofolate + H(+). It functions in the pathway one-carbon metabolism; tetrahydrofolate interconversion. In terms of biological role, catalyzes the oxidation of 5,10-methylenetetrahydrofolate to 5,10-methenyltetrahydrofolate and then the hydrolysis of 5,10-methenyltetrahydrofolate to 10-formyltetrahydrofolate. The chain is Bifunctional protein FolD from Amoebophilus asiaticus (strain 5a2).